We begin with the raw amino-acid sequence, 155 residues long: DNA gyrase inhibitor (155 aa).

This sequence belongs to the DNA gyrase inhibitor family. Interacts with DNA gyrase.

The protein localises to the cytoplasm. Functionally, inhibits the supercoiling activity of DNA gyrase. Acts by inhibiting DNA gyrase at an early step, prior to (or at the step of) binding of DNA by the gyrase. It protects cells against toxins that target DNA gyrase, by inhibiting activity of these toxins and reducing the formation of lethal double-strand breaks in the cell. This Salmonella arizonae (strain ATCC BAA-731 / CDC346-86 / RSK2980) protein is DNA gyrase inhibitor.